The following is a 316-amino-acid chain: Transaldolase (316 aa).

Catalysis depends on Lys-127, which acts as the Schiff-base intermediate with substrate.

This sequence belongs to the transaldolase family. Type 2 subfamily.

It localises to the cytoplasm. It catalyses the reaction D-sedoheptulose 7-phosphate + D-glyceraldehyde 3-phosphate = D-erythrose 4-phosphate + beta-D-fructose 6-phosphate. It participates in carbohydrate degradation; pentose phosphate pathway; D-glyceraldehyde 3-phosphate and beta-D-fructose 6-phosphate from D-ribose 5-phosphate and D-xylulose 5-phosphate (non-oxidative stage): step 2/3. Its function is as follows. Transaldolase is important for the balance of metabolites in the pentose-phosphate pathway. The polypeptide is Transaldolase (Helicobacter pylori (strain P12)).